A 535-amino-acid chain; its full sequence is Light-independent protochlorophyllide reductase subunit B (535 aa).

Asp-36 contributes to the [4Fe-4S] cluster binding site. Asp-292 serves as the catalytic Proton donor. 428-429 (GL) provides a ligand contact to substrate.

It belongs to the ChlB/BchB/BchZ family. As to quaternary structure, protochlorophyllide reductase is composed of three subunits; BchL, BchN and BchB. Forms a heterotetramer of two BchB and two BchN subunits. [4Fe-4S] cluster serves as cofactor.

It carries out the reaction chlorophyllide a + oxidized 2[4Fe-4S]-[ferredoxin] + 2 ADP + 2 phosphate = protochlorophyllide a + reduced 2[4Fe-4S]-[ferredoxin] + 2 ATP + 2 H2O. The protein operates within porphyrin-containing compound metabolism; bacteriochlorophyll biosynthesis (light-independent). Its function is as follows. Component of the dark-operative protochlorophyllide reductase (DPOR) that uses Mg-ATP and reduced ferredoxin to reduce ring D of protochlorophyllide (Pchlide) to form chlorophyllide a (Chlide). This reaction is light-independent. The NB-protein (BchN-BchB) is the catalytic component of the complex. In Chlorobaculum parvum (strain DSM 263 / NCIMB 8327) (Chlorobium vibrioforme subsp. thiosulfatophilum), this protein is Light-independent protochlorophyllide reductase subunit B.